The following is a 226-amino-acid chain: uncharacterized protein (226 aa).

2 disordered regions span residues 1-20 and 205-226; these read MGAERVGRAPGVNAKRAVQT and LDRKNTAIAQDKSERKKVQRDA.

This is an uncharacterized protein from Treponema pallidum (strain Nichols).